The sequence spans 932 residues: 2-oxoglutarate dehydrogenase E1 component (932 aa).

Belongs to the alpha-ketoglutarate dehydrogenase family. In terms of assembly, homodimer. Part of the 2-oxoglutarate dehydrogenase (OGDH) complex composed of E1 (2-oxoglutarate dehydrogenase), E2 (dihydrolipoamide succinyltransferase) and E3 (dihydrolipoamide dehydrogenase); the complex contains multiple copies of the three enzymatic components (E1, E2 and E3). Thiamine diphosphate is required as a cofactor.

It catalyses the reaction N(6)-[(R)-lipoyl]-L-lysyl-[protein] + 2-oxoglutarate + H(+) = N(6)-[(R)-S(8)-succinyldihydrolipoyl]-L-lysyl-[protein] + CO2. Its function is as follows. E1 component of the 2-oxoglutarate dehydrogenase (OGDH) complex which catalyzes the decarboxylation of 2-oxoglutarate, the first step in the conversion of 2-oxoglutarate to succinyl-CoA and CO(2). The sequence is that of 2-oxoglutarate dehydrogenase E1 component from Staphylococcus aureus (strain JH9).